Consider the following 542-residue polypeptide: Nuclear speckle splicing regulatory protein 1 (542 aa).

The segment at 21–53 (RVLQKPSVFGSDSDDDETSVSESLQREAAKKQA) is disordered. Residues Ser-27, Ser-31, and Ser-33 each carry the phosphoserine modification. The stretch at 103–172 (IHNLLKAVEI…RAAALEAHLD (70 aa)) forms a coiled coil. The interval 105-169 (NLLKAVEIRK…REKRAAALEA (65 aa)) is necessary for alternative splicing activity. The segment at 190–516 (AVGEEAAPKS…FAKRSNEETV (327 aa)) is disordered. Residues Lys-198 and Lys-209 each participate in a glycyl lysine isopeptide (Lys-Gly) (interchain with G-Cter in SUMO2) cross-link. Residues 200–217 (SFREARTVIKEEKLRGYP) show a composition bias toward basic and acidic residues. The span at 223–232 (ESRPPQQSCV) shows a compositional bias: polar residues. The segment covering 239-256 (EAEENPDADREFDDESSE) has biased composition (acidic residues). Phosphoserine is present on residues Ser-254 and Ser-255. Basic and acidic residues predominate over residues 257-271 (DGEKRDHKVKSRGED). Lys-277 is modified (N6-acetyllysine). Residues 277-288 (KHPKHHKNRAHS) are compositionally biased toward basic residues. Residue Lys-280 forms a Glycyl lysine isopeptide (Lys-Gly) (interchain with G-Cter in SUMO2) linkage. Composition is skewed to basic and acidic residues over residues 309–335 (RGHE…EEKS), 343–475 (SHKD…KPSH), and 485–501 (RLAE…ERPP). Residues 372-413 (KREKYSSREQERDRQRNDHDRYSEKEKKRKEKEEHTKARRER) are a coiled coil. Ser-443 is modified (phosphoserine).

The protein belongs to the NSRP1 family. As to quaternary structure, interacts (via C-terminus) with SRSF1. Interacts (via C-terminus) with SRSF2.

It is found in the nucleus. The protein localises to the nucleus speckle. Functionally, RNA-binding protein that mediates pre-mRNA alternative splicing regulation. In Mus musculus (Mouse), this protein is Nuclear speckle splicing regulatory protein 1 (Nsrp1).